The sequence spans 210 residues: 3-hexulose-6-phosphate synthase 3 (210 aa).

It belongs to the HPS/KGPDC family. HPS subfamily.

The enzyme catalyses D-ribulose 5-phosphate + formaldehyde = D-arabino-hex-3-ulose 6-phosphate. It functions in the pathway one-carbon metabolism; formaldehyde assimilation via RuMP pathway; D-fructose 6-phosphate from D-ribulose 5-phosphate and formaldehyde: step 1/2. Its function is as follows. Catalyzes the condensation of ribulose 5-phosphate with formaldehyde to form 3-hexulose 6-phosphate. This Staphylococcus saprophyticus subsp. saprophyticus (strain ATCC 15305 / DSM 20229 / NCIMB 8711 / NCTC 7292 / S-41) protein is 3-hexulose-6-phosphate synthase 3.